The sequence spans 422 residues: Replication factor C large subunit (422 aa).

An ATP-binding site is contributed by 63–70; the sequence is GPPGVGKT.

This sequence belongs to the activator 1 small subunits family. RfcL subfamily. As to quaternary structure, heteromultimer composed of small subunits (RfcS) and large subunits (RfcL).

Part of the RFC clamp loader complex which loads the PCNA sliding clamp onto DNA. In Pyrobaculum aerophilum (strain ATCC 51768 / DSM 7523 / JCM 9630 / CIP 104966 / NBRC 100827 / IM2), this protein is Replication factor C large subunit.